We begin with the raw amino-acid sequence, 318 residues long: NADH-ubiquinone oxidoreductase chain 1 (318 aa).

8 consecutive transmembrane segments (helical) span residues 2–22 (FMIN…FLTL), 68–88 (ITMF…MWTP), 100–120 (LGVL…LWSG), 146–166 (LAII…PALI), 171–191 (HMWL…STLA), 222–242 (LFFL…TILF), 253–273 (ELYT…FLWV), and 294–314 (LPLT…TAGI).

This sequence belongs to the complex I subunit 1 family.

The protein resides in the mitochondrion inner membrane. The catalysed reaction is a ubiquinone + NADH + 5 H(+)(in) = a ubiquinol + NAD(+) + 4 H(+)(out). Core subunit of the mitochondrial membrane respiratory chain NADH dehydrogenase (Complex I) that is believed to belong to the minimal assembly required for catalysis. Complex I functions in the transfer of electrons from NADH to the respiratory chain. The immediate electron acceptor for the enzyme is believed to be ubiquinone. This chain is NADH-ubiquinone oxidoreductase chain 1 (MT-ND1), found in Coelops frithii (East Asian tailless leaf-nosed bat).